Here is a 209-residue protein sequence, read N- to C-terminus: Molybdenum cofactor guanylyltransferase (209 aa).

Residues 13–15 (LAG), K26, N54, D72, and D107 each bind GTP. Residue D107 participates in Mg(2+) binding.

Belongs to the MobA family. As to quaternary structure, monomer. Requires Mg(2+) as cofactor.

The protein resides in the cytoplasm. The catalysed reaction is Mo-molybdopterin + GTP + H(+) = Mo-molybdopterin guanine dinucleotide + diphosphate. Functionally, transfers a GMP moiety from GTP to Mo-molybdopterin (Mo-MPT) cofactor (Moco or molybdenum cofactor) to form Mo-molybdopterin guanine dinucleotide (Mo-MGD) cofactor. The chain is Molybdenum cofactor guanylyltransferase from Nitrobacter hamburgensis (strain DSM 10229 / NCIMB 13809 / X14).